Consider the following 498-residue polypeptide: XK-related protein 4 (498 aa).

The segment at 24–46 (SEHSGSVQGLHPGAQPDSAGAGD) is disordered. The next 2 membrane-spanning stretches (helical) occupy residues 81–101 (CLWI…DVWL) and 111–131 (YWWF…VQLF). The segment at 166–203 (SHGDVTAQHHPATPQRQASTASRNTTTNSTASTGLGPR) is disordered. The segment covering 183–198 (ASTASRNTTTNSTAST) has biased composition (low complexity). The next 2 helical transmembrane spans lie at 302–322 (LFIY…LWYL) and 332–352 (FAVP…VFML).

Belongs to the XK family.

It localises to the cell membrane. The enzyme catalyses a 1,2-diacyl-sn-glycero-3-phospho-L-serine(in) = a 1,2-diacyl-sn-glycero-3-phospho-L-serine(out). Phospholipid scramblase that promotes phosphatidylserine exposure on apoptotic cell surface. Phosphatidylserine is a specific marker only present at the surface of apoptotic cells and acts as a specific signal for engulfment. In Tetraodon nigroviridis (Spotted green pufferfish), this protein is XK-related protein 4.